Consider the following 864-residue polypeptide: Leucine--tRNA ligase (864 aa).

The short motif at 57 to 67 (PYPSGNLHMGH) is the 'HIGH' region element. The 'KMSKS' region motif lies at 628-632 (KMSKS). Residue K631 coordinates ATP.

It belongs to the class-I aminoacyl-tRNA synthetase family.

It is found in the cytoplasm. It catalyses the reaction tRNA(Leu) + L-leucine + ATP = L-leucyl-tRNA(Leu) + AMP + diphosphate. In Prochlorococcus marinus (strain MIT 9515), this protein is Leucine--tRNA ligase.